Consider the following 414-residue polypeptide: 5-aminolevulinate synthase (414 aa).

The substrate site is built by Arg22, Ser133, and Lys152. Pyridoxal 5'-phosphate-binding residues include Ser185, His213, and Thr241. Residue Lys244 is part of the active site. Residue Lys244 is modified to N6-(pyridoxal phosphate)lysine. Positions 273 and 274 each coordinate pyridoxal 5'-phosphate. Thr359 contacts substrate.

The protein belongs to the class-II pyridoxal-phosphate-dependent aminotransferase family. As to quaternary structure, homodimer. The cofactor is pyridoxal 5'-phosphate.

The enzyme catalyses succinyl-CoA + glycine + H(+) = 5-aminolevulinate + CO2 + CoA. It functions in the pathway porphyrin-containing compound metabolism; protoporphyrin-IX biosynthesis; 5-aminolevulinate from glycine: step 1/1. The polypeptide is 5-aminolevulinate synthase (hemA) (Rickettsia felis (strain ATCC VR-1525 / URRWXCal2) (Rickettsia azadi)).